Reading from the N-terminus, the 206-residue chain is Thymidylate kinase (206 aa).

Gly7–Thr14 is an ATP binding site.

It belongs to the thymidylate kinase family.

It catalyses the reaction dTMP + ATP = dTDP + ADP. Functionally, phosphorylation of dTMP to form dTDP in both de novo and salvage pathways of dTTP synthesis. This chain is Thymidylate kinase, found in Synechococcus sp. (strain JA-2-3B'a(2-13)) (Cyanobacteria bacterium Yellowstone B-Prime).